A 167-amino-acid polypeptide reads, in one-letter code: uncharacterized protein (167 aa).

Residues 1 to 21 (MFDFSFPTPASAGTRMGPASC) are disordered.

This is an uncharacterized protein from Homo sapiens (Human).